Reading from the N-terminus, the 642-residue chain is Threonine--tRNA ligase (642 aa).

The 63-residue stretch at 1 to 63 folds into the TGS domain; the sequence is MSEIVVTLPD…TDDCELVIVT (63 aa). A catalytic region spans residues 242 to 533; sequence DHRKLGQELD…LIEHFDGNFP (292 aa). Positions 334, 385, and 510 each coordinate Zn(2+).

This sequence belongs to the class-II aminoacyl-tRNA synthetase family. Homodimer. Zn(2+) is required as a cofactor.

The protein resides in the cytoplasm. It catalyses the reaction tRNA(Thr) + L-threonine + ATP = L-threonyl-tRNA(Thr) + AMP + diphosphate + H(+). Its function is as follows. Catalyzes the attachment of threonine to tRNA(Thr) in a two-step reaction: L-threonine is first activated by ATP to form Thr-AMP and then transferred to the acceptor end of tRNA(Thr). In Natronomonas pharaonis (strain ATCC 35678 / DSM 2160 / CIP 103997 / JCM 8858 / NBRC 14720 / NCIMB 2260 / Gabara) (Halobacterium pharaonis), this protein is Threonine--tRNA ligase.